Here is a 109-residue protein sequence, read N- to C-terminus: Protein phosphatase 1 regulatory subunit 1C (109 aa).

The tract at residues 25-109 (AEQIRKRRPT…TNEREEQRDH (85 aa)) is disordered. The segment covering 45-54 (NPPEIDDKRG) has biased composition (basic and acidic residues). Over residues 55–75 (PNTQGELQNASPKQRKQSVYT) the composition is skewed to polar residues. The span at 100 to 109 (TNEREEQRDH) shows a compositional bias: basic and acidic residues.

This sequence belongs to the protein phosphatase inhibitor 1 family.

Its subcellular location is the cytoplasm. In terms of biological role, may increase cell susceptibility to TNF-induced apoptosis. The polypeptide is Protein phosphatase 1 regulatory subunit 1C (PPP1R1C) (Homo sapiens (Human)).